Reading from the N-terminus, the 206-residue chain is N-(5'-phosphoribosyl)anthranilate isomerase (206 aa).

It belongs to the TrpF family.

It catalyses the reaction N-(5-phospho-beta-D-ribosyl)anthranilate = 1-(2-carboxyphenylamino)-1-deoxy-D-ribulose 5-phosphate. It participates in amino-acid biosynthesis; L-tryptophan biosynthesis; L-tryptophan from chorismate: step 3/5. The chain is N-(5'-phosphoribosyl)anthranilate isomerase from Pseudomonas putida (strain W619).